The following is a 530-amino-acid chain: [Pyruvate dehydrogenase [acetyl-transferring]]-phosphatase 2, mitochondrial (530 aa).

A mitochondrion-targeting transit peptide spans 1–67 (MSSTASYRIF…FALRKAYRHT (67 aa)). Positions 107–518 (VLRFESNQLA…DDITVMVVFF (412 aa)) constitute a PPM-type phosphatase domain. Mn(2+)-binding residues include Asp142, Gly143, Asp413, and Asp509.

It belongs to the PP2C family. Requires Mg(2+) as cofactor. Highly expressed in liver.

The protein resides in the mitochondrion. The catalysed reaction is O-phospho-L-seryl-[pyruvate dehydrogenase E1 alpha subunit] + H2O = L-seryl-[pyruvate dehydrogenase E1 alpha subunit] + phosphate. Its activity is regulated as follows. Mg(2+)-dependent protein phosphatase. Phosphatase activity is increased in the presence of spermine, a naturally produced polyamine. In terms of biological role, mitochondrial enzyme that catalyzes the dephosphorylation and concomitant reactivation of the alpha subunit of the E1 component of the pyruvate dehydrogenase complex (PDC), thereby stimulating the conversion of pyruvate into acetyl-CoA. Acts as a crucial regulator of T cell metabolism and function, with a particular focus on T-helper Th17. The protein is [Pyruvate dehydrogenase [acetyl-transferring]]-phosphatase 2, mitochondrial (Pdp2) of Rattus norvegicus (Rat).